Here is a 611-residue protein sequence, read N- to C-terminus: Brain-enriched guanylate kinase-associated protein (611 aa).

A Phosphotyrosine modification is found at Tyr156. 3 positions are modified to phosphoserine: Ser219, Ser248, and Ser265. Thr268 is subject to Phosphothreonine. A phosphoserine mark is found at Ser284, Ser364, and Ser391. Arg399 is modified (asymmetric dimethylarginine). A phosphoserine mark is found at Ser474, Ser484, Ser494, Ser496, Ser519, Ser521, and Ser525. A disordered region spans residues 520–611; the sequence is LSPSRSADPL…KAQLYGTLLN (92 aa). Positions 554-563 are enriched in basic and acidic residues; sequence EPEHGSRDSL. Phosphoserine occurs at positions 571 and 581.

In terms of assembly, interacts with DLG4 and DLGAP1 and forms a ternary complex. Brain-specific. Expressed in neurons and rather enriched at synaptic junctions.

It is found in the cytoplasm. It localises to the membrane. Functionally, may sustain the structure of the postsynaptic density (PSD). The sequence is that of Brain-enriched guanylate kinase-associated protein (Begain) from Rattus norvegicus (Rat).